Reading from the N-terminus, the 158-residue chain is 2-C-methyl-D-erythritol 2,4-cyclodiphosphate synthase (158 aa).

Asp9 and His11 together coordinate a divalent metal cation. Residues 9–11 (DVH) and 35–36 (HS) contribute to the 4-CDP-2-C-methyl-D-erythritol 2-phosphate site. His43 serves as a coordination point for a divalent metal cation. Residues 57–59 (DIG), 62–66 (FPDTD), 133–136 (TTTE), Phe140, and Arg143 contribute to the 4-CDP-2-C-methyl-D-erythritol 2-phosphate site.

This sequence belongs to the IspF family. In terms of assembly, homotrimer. Requires a divalent metal cation as cofactor.

The catalysed reaction is 4-CDP-2-C-methyl-D-erythritol 2-phosphate = 2-C-methyl-D-erythritol 2,4-cyclic diphosphate + CMP. Its pathway is isoprenoid biosynthesis; isopentenyl diphosphate biosynthesis via DXP pathway; isopentenyl diphosphate from 1-deoxy-D-xylulose 5-phosphate: step 4/6. Functionally, involved in the biosynthesis of isopentenyl diphosphate (IPP) and dimethylallyl diphosphate (DMAPP), two major building blocks of isoprenoid compounds. Catalyzes the conversion of 4-diphosphocytidyl-2-C-methyl-D-erythritol 2-phosphate (CDP-ME2P) to 2-C-methyl-D-erythritol 2,4-cyclodiphosphate (ME-CPP) with a corresponding release of cytidine 5-monophosphate (CMP). This is 2-C-methyl-D-erythritol 2,4-cyclodiphosphate synthase from Haemophilus influenzae (strain PittEE).